The sequence spans 382 residues: Lipid-A-disaccharide synthase (382 aa).

This sequence belongs to the LpxB family.

It carries out the reaction 2-N,3-O-bis[(3R)-3-hydroxytetradecanoyl]-alpha-D-glucosaminyl 1-phosphate + UDP-2-N,3-O-bis[(3R)-3-hydroxytetradecanoyl]-alpha-D-glucosamine = lipid A disaccharide (E. coli) + UDP + H(+). It catalyses the reaction a lipid X + a UDP-2-N,3-O-bis[(3R)-3-hydroxyacyl]-alpha-D-glucosamine = a lipid A disaccharide + UDP + H(+). It functions in the pathway glycolipid biosynthesis; lipid IV(A) biosynthesis; lipid IV(A) from (3R)-3-hydroxytetradecanoyl-[acyl-carrier-protein] and UDP-N-acetyl-alpha-D-glucosamine: step 5/6. In terms of biological role, condensation of UDP-2,3-diacylglucosamine and 2,3-diacylglucosamine-1-phosphate to form lipid A disaccharide, a precursor of lipid A, a phosphorylated glycolipid that anchors the lipopolysaccharide to the outer membrane of the cell. The protein is Lipid-A-disaccharide synthase of Salmonella paratyphi B (strain ATCC BAA-1250 / SPB7).